A 1368-amino-acid polypeptide reads, in one-letter code: DNA-directed RNA polymerase subunit beta (1368 aa).

This sequence belongs to the RNA polymerase beta chain family. As to quaternary structure, the RNAP catalytic core consists of 2 alpha, 1 beta, 1 beta' and 1 omega subunit. When a sigma factor is associated with the core the holoenzyme is formed, which can initiate transcription.

It carries out the reaction RNA(n) + a ribonucleoside 5'-triphosphate = RNA(n+1) + diphosphate. DNA-dependent RNA polymerase catalyzes the transcription of DNA into RNA using the four ribonucleoside triphosphates as substrates. This is DNA-directed RNA polymerase subunit beta from Legionella pneumophila subsp. pneumophila (strain Philadelphia 1 / ATCC 33152 / DSM 7513).